The following is a 428-amino-acid chain: RNA-binding protein 34 (428 aa).

Disordered stretches follow at residues 1–106 (MALR…KVKV) and 127–152 (DLEE…TDGE). Residue Lys-147 is modified to N6-acetyllysine. 2 RRM domains span residues 183–278 (RTVF…LASE) and 285–362 (RSVF…RSVN). A Glycyl lysine isopeptide (Lys-Gly) (interchain with G-Cter in SUMO2) cross-link involves residue Lys-240. Ser-286 carries the phosphoserine modification. The segment at 361–428 (VNKEKLKQQN…GQTKKPRKQK (68 aa)) is disordered. Over residues 408–428 (LMKKKKGQKKKGQTKKPRKQK) the composition is skewed to basic residues.

The protein belongs to the RRM RBM34 family.

The protein localises to the nucleus. It is found in the nucleolus. In Rattus norvegicus (Rat), this protein is RNA-binding protein 34 (Rbm34).